The primary structure comprises 92 residues: Small ribosomal subunit protein uS19c (92 aa).

It belongs to the universal ribosomal protein uS19 family.

It localises to the plastid. The protein localises to the chloroplast. Functionally, protein S19 forms a complex with S13 that binds strongly to the 16S ribosomal RNA. The chain is Small ribosomal subunit protein uS19c from Nymphaea alba (White water-lily).